Here is a 253-residue protein sequence, read N- to C-terminus: Uridylate kinase (253 aa).

ATP is bound at residue 26-29; that stretch reads KLSG. Residue glycine 68 coordinates UMP. 2 residues coordinate ATP: glycine 69 and arginine 73. UMP is bound by residues aspartate 88 and 149 to 156; that span reads TGNPFFTT. The ATP site is built by threonine 176, tyrosine 182, and aspartate 185.

It belongs to the UMP kinase family. As to quaternary structure, homohexamer.

Its subcellular location is the cytoplasm. It catalyses the reaction UMP + ATP = UDP + ADP. The protein operates within pyrimidine metabolism; CTP biosynthesis via de novo pathway; UDP from UMP (UMPK route): step 1/1. Inhibited by UTP. Its function is as follows. Catalyzes the reversible phosphorylation of UMP to UDP. This chain is Uridylate kinase, found in Chromohalobacter salexigens (strain ATCC BAA-138 / DSM 3043 / CIP 106854 / NCIMB 13768 / 1H11).